The sequence spans 444 residues: Glutamate-1-semialdehyde 2,1-aminomutase (444 aa).

The residue at position 267 (Lys-267) is an N6-(pyridoxal phosphate)lysine.

The protein belongs to the class-III pyridoxal-phosphate-dependent aminotransferase family. HemL subfamily. In terms of assembly, homodimer. Requires pyridoxal 5'-phosphate as cofactor.

The protein localises to the cytoplasm. It catalyses the reaction (S)-4-amino-5-oxopentanoate = 5-aminolevulinate. Its pathway is porphyrin-containing compound metabolism; protoporphyrin-IX biosynthesis; 5-aminolevulinate from L-glutamyl-tRNA(Glu): step 2/2. This Xylella fastidiosa (strain 9a5c) protein is Glutamate-1-semialdehyde 2,1-aminomutase.